We begin with the raw amino-acid sequence, 137 residues long: ATP synthase epsilon chain, chloroplastic (137 aa).

It belongs to the ATPase epsilon chain family. F-type ATPases have 2 components, CF(1) - the catalytic core - and CF(0) - the membrane proton channel. CF(1) has five subunits: alpha(3), beta(3), gamma(1), delta(1), epsilon(1). CF(0) has three main subunits: a, b and c.

The protein resides in the plastid. Its subcellular location is the chloroplast thylakoid membrane. Functionally, produces ATP from ADP in the presence of a proton gradient across the membrane. This chain is ATP synthase epsilon chain, chloroplastic, found in Medicago sativa (Alfalfa).